A 520-amino-acid polypeptide reads, in one-letter code: Rho GTPase-activating protein gacV (520 aa).

The chain crosses the membrane as a helical span at residues 8–28; it reads NIKTYYIIGIITLIFIVSAVI. The stretch at 28–192 forms a coiled coil; sequence IKNQLSSSNQ…EEQEEEQFSM (165 aa). Disordered stretches follow at residues 33 to 73, 121 to 189, 348 to 373, and 489 to 520; these read SSSN…KLDN, EEKQ…EEEQ, NNNN…NNNE, and LQEQ…DQEE. Basic residues predominate over residues 52–62; sequence SKGRGNKKGKK. Over residues 63–73 the composition is skewed to basic and acidic residues; sequence PEKIQEKKLDN. The segment covering 140-189 has biased composition (acidic residues); it reads QEEEEEEEEQQEIEEDEEEEEGQEQEEEEEQQEIEEGEEEQQEEEQEEEQ. Residues 195 to 472 form the Rho-GAP domain; it reads VSIERLMDFQ…ILLKQKKEIA (278 aa). The segment covering 348-372 has biased composition (low complexity); it reads NNNNNNNNNNNNNNNNNNDNNNNNN. Residues 480-520 adopt a coiled-coil conformation; sequence YFKDEYSKKLQEQNDQEEDNQEEEKDNQEEDEDEEDKDQEE. Residues 493–520 are compositionally biased toward acidic residues; that stretch reads NDQEEDNQEEEKDNQEEDEDEEDKDQEE.

The protein resides in the membrane. In terms of biological role, rho GTPase-activating protein involved in the signal transduction pathway. The sequence is that of Rho GTPase-activating protein gacV (gacV) from Dictyostelium discoideum (Social amoeba).